The following is a 548-amino-acid chain: Chaperonin GroEL (548 aa).

ATP is bound by residues 30 to 33 (TLGP), Lys51, 87 to 91 (DGTTT), Gly415, 479 to 481 (NAA), and Asp495.

Belongs to the chaperonin (HSP60) family. As to quaternary structure, forms a cylinder of 14 subunits composed of two heptameric rings stacked back-to-back. Interacts with the co-chaperonin GroES.

Its subcellular location is the cytoplasm. It carries out the reaction ATP + H2O + a folded polypeptide = ADP + phosphate + an unfolded polypeptide.. Its function is as follows. Together with its co-chaperonin GroES, plays an essential role in assisting protein folding. The GroEL-GroES system forms a nano-cage that allows encapsulation of the non-native substrate proteins and provides a physical environment optimized to promote and accelerate protein folding. The polypeptide is Chaperonin GroEL (Pseudomonas fluorescens (strain Pf0-1)).